The chain runs to 224 residues: Orotidine 5'-phosphate decarboxylase (224 aa).

Substrate-binding positions include Asp10, Lys32, 59-68 (DLKLHDIPNT), Thr115, Arg175, Gln184, Gly204, and Arg205. Lys61 functions as the Proton donor in the catalytic mechanism.

The protein belongs to the OMP decarboxylase family. Type 1 subfamily. In terms of assembly, homodimer.

The enzyme catalyses orotidine 5'-phosphate + H(+) = UMP + CO2. Its pathway is pyrimidine metabolism; UMP biosynthesis via de novo pathway; UMP from orotate: step 2/2. In terms of biological role, catalyzes the decarboxylation of orotidine 5'-monophosphate (OMP) to uridine 5'-monophosphate (UMP). The polypeptide is Orotidine 5'-phosphate decarboxylase (Novosphingobium aromaticivorans (strain ATCC 700278 / DSM 12444 / CCUG 56034 / CIP 105152 / NBRC 16084 / F199)).